The following is a 581-amino-acid chain: Adenine deaminase (581 aa).

It belongs to the metallo-dependent hydrolases superfamily. Adenine deaminase family. The cofactor is Mn(2+).

It carries out the reaction adenine + H2O + H(+) = hypoxanthine + NH4(+). This is Adenine deaminase from Brucella abortus (strain 2308).